A 655-amino-acid chain; its full sequence is SRSF protein kinase 1 (655 aa).

Residues 1-57 (MERKVLALQARKKRTKAKKDKAQRKSETQHRGSAPHSESDLPEQEEEILGSDDDEQE) form a disordered region. A compositionally biased stretch (basic residues) spans 10 to 22 (ARKKRTKAKKDKA). Residues 40–57 (DLPEQEEEILGSDDDEQE) are compositionally biased toward acidic residues. Serine 51 carries the post-translational modification Phosphoserine; by CK2. Residues 80-653 (YHVIRKLGWG…AAECLRHPWL (574 aa)) form the Protein kinase domain. Residues 86–94 (LGWGHFSTV), lysine 109, and 166–168 (EVL) contribute to the ATP site. Aspartate 213 serves as the catalytic Proton acceptor. 2 disordered regions span residues 238–341 (WQRS…QDQT) and 397–417 (FLSS…CTPI). Residues 265–276 (KNKKKKLKKKQK) show a composition bias toward basic residues. 2 stretches are compositionally biased toward basic and acidic residues: residues 277–288 (RQAELLEKRMQE) and 304–318 (NKQE…RPLK). Serine 309, serine 311, and serine 333 each carry phosphoserine. A Phosphoserine; by CK2 modification is found at serine 555.

Belongs to the protein kinase superfamily. CMGC Ser/Thr protein kinase family. As to quaternary structure, monomer. Isoform 2 is found in a multisubunit complex containing seven proteins, named toposome, which separates entangled circular chromatin DNA during chromosome segregation. Isoform 2 interacts with DNAJC8 and AHSA1/AHA1 and this mediates formation of a complex with the Hsp70 /Hsp90 machinery. Isoform 1 is found in a complex with: DHX9, MOV10, MATR3, HNRNPU, NCL, DDX21, HSD17B4, PABPC1, HNRNPM, IGF2BP1, SYNCRIP, RPL3, VIM, YBX1, NPM1, HNRNPA2B1, HNRNPC, RPLP0, RPL7A and RALY. Isoform 2 binds to IGF2BP1, SYNCRIP, HNRNPA2B1 and HNRNPC. Isoform 1 and isoform 2 interact with SAFB which inhibits its activity. Isoform 2 interacts with SAFB2 which inhibits its activity. (Microbial infection) Isoform 2 interacts with HHV-1 ICP27 protein. The cofactor is Mg(2+). In terms of tissue distribution, isoform 2 is predominantly expressed in the testis but is also present at lower levels in heart, ovary, small intestine, liver, kidney, pancreas and skeletal muscle. Isoform 1 is only seen in the testis, at lower levels than isoform 2. Highly expressed in different erythroid and lymphoid cell lines, with isoform 2 being far more abundant than isoform 1.

It localises to the cytoplasm. Its subcellular location is the nucleus. The protein resides in the nucleus matrix. The protein localises to the microsome. It is found in the nucleoplasm. It localises to the nucleus speckle. Its subcellular location is the chromosome. The catalysed reaction is L-seryl-[protein] + ATP = O-phospho-L-seryl-[protein] + ADP + H(+). The enzyme catalyses L-threonyl-[protein] + ATP = O-phospho-L-threonyl-[protein] + ADP + H(+). Activated by phosphorylation on Ser-51 and Ser-555. In terms of biological role, serine/arginine-rich protein-specific kinase which specifically phosphorylates its substrates at serine residues located in regions rich in arginine/serine dipeptides, known as RS domains and is involved in the phosphorylation of SR splicing factors and the regulation of splicing. Plays a central role in the regulatory network for splicing, controlling the intranuclear distribution of splicing factors in interphase cells and the reorganization of nuclear speckles during mitosis. Can influence additional steps of mRNA maturation, as well as other cellular activities, such as chromatin reorganization in somatic and sperm cells and cell cycle progression. Isoform 2 phosphorylates SFRS2, ZRSR2, LBR and PRM1. Isoform 2 phosphorylates SRSF1 using a directional (C-terminal to N-terminal) and a dual-track mechanism incorporating both processive phosphorylation (in which the kinase stays attached to the substrate after each round of phosphorylation) and distributive phosphorylation steps (in which the kinase and substrate dissociate after each phosphorylation event). The RS domain of SRSF1 binds first to a docking groove in the large lobe of the kinase domain of SRPK1. This induces certain structural changes in SRPK1 and/or RRM2 domain of SRSF1, allowing RRM2 to bind the kinase and initiate phosphorylation. The cycles continue for several phosphorylation steps in a processive manner (steps 1-8) until the last few phosphorylation steps (approximately steps 9-12). During that time, a mechanical stress induces the unfolding of the beta-4 motif in RRM2, which then docks at the docking groove of SRPK1. This also signals RRM2 to begin to dissociate, which facilitates SRSF1 dissociation after phosphorylation is completed. Isoform 2 can mediate hepatitis B virus (HBV) core protein phosphorylation. It plays a negative role in the regulation of HBV replication through a mechanism not involving the phosphorylation of the core protein but by reducing the packaging efficiency of the pregenomic RNA (pgRNA) without affecting the formation of the viral core particles. Isoform 1 and isoform 2 can induce splicing of exon 10 in MAPT/TAU. The ratio of isoform 1/isoform 2 plays a decisive role in determining cell fate in K-562 leukaemic cell line: isoform 2 favors proliferation where as isoform 1 favors differentiation. This is SRSF protein kinase 1 from Homo sapiens (Human).